A 275-amino-acid polypeptide reads, in one-letter code: Small ribosomal subunit protein uS2 (275 aa).

The segment at 226–275 (AAAPNSASVREEEFSAEAGDEGKGRRAPAKKATEKKADAPAAAPEAPAAE) is disordered. Over residues 264 to 275 (APAAAPEAPAAE) the composition is skewed to low complexity.

It belongs to the universal ribosomal protein uS2 family.

The polypeptide is Small ribosomal subunit protein uS2 (Xanthomonas campestris pv. campestris (strain ATCC 33913 / DSM 3586 / NCPPB 528 / LMG 568 / P 25)).